The sequence spans 276 residues: MLFKQWNDLPEPKHLLDLPEISKNLQSLEVCPVPKVEFPQDLDVPQYSTAVITTKIMNPLFPKNLLQLTSIGEIKTTLTVKSPSLPQSSGKHSWNYDENFPNEVDPDQKNDTADETVYGFSFPIYSFGKTLLFSMEENFISISPIFGNMISRSIISQLAQFSPDIIVIGTSDKIASMKVMTENECTLQPPEFITGFIGSVLTQLIVGPSKGLKFKCLVAPSEGPNGFEKLSLSDMGSLVDLCGQWLGFEPSRYSEECYRLWRCDSAAIGAQSGLYI.

Belongs to the PSMG1 family. In terms of assembly, component of the 20S proteasome chaperone. Forms a heterodimer with ADD66 that binds to proteasome precursors.

Its subcellular location is the cytoplasm. Involved in 20S proteasome assembly. This Saccharomyces cerevisiae (strain ATCC 204508 / S288c) (Baker's yeast) protein is Proteasome chaperone 1 (PBA1).